A 192-amino-acid polypeptide reads, in one-letter code: 3-hydroxyanthranilate 3,4-dioxygenase 1 (192 aa).

Arginine 50 serves as a coordination point for O2. Residues histidine 54, glutamate 60, and histidine 102 each coordinate Fe cation. Glutamate 60 is a substrate binding site. Positions 106 and 116 each coordinate substrate. A divalent metal cation-binding residues include cysteine 131, cysteine 134, cysteine 168, and cysteine 171.

The protein belongs to the 3-HAO family. The cofactor is Fe(2+).

The protein localises to the cytoplasm. The enzyme catalyses 3-hydroxyanthranilate + O2 = (2Z,4Z)-2-amino-3-carboxymuconate 6-semialdehyde. It participates in cofactor biosynthesis; NAD(+) biosynthesis; quinolinate from L-kynurenine: step 3/3. In terms of biological role, catalyzes the oxidative ring opening of 3-hydroxyanthranilate to 2-amino-3-carboxymuconate semialdehyde, which spontaneously cyclizes to quinolinate. The sequence is that of 3-hydroxyanthranilate 3,4-dioxygenase 1 (bna1-1) from Aspergillus clavatus (strain ATCC 1007 / CBS 513.65 / DSM 816 / NCTC 3887 / NRRL 1 / QM 1276 / 107).